The following is a 360-amino-acid chain: D-alanine--D-alanine ligase (360 aa).

The ATP-grasp domain occupies 139–344 (KDVFAQAGLA…YPELIEKLVS (206 aa)). 172-227 (EQVLGYPCFVKPANMGSSVGISKCRSKEELQTAFDLAFQYDRRVVVEEGVVGREIE) is an ATP binding site. 3 residues coordinate Mg(2+): Asp-298, Glu-311, and Asn-313.

Belongs to the D-alanine--D-alanine ligase family. Mg(2+) is required as a cofactor. It depends on Mn(2+) as a cofactor.

It localises to the cytoplasm. The catalysed reaction is 2 D-alanine + ATP = D-alanyl-D-alanine + ADP + phosphate + H(+). The protein operates within cell wall biogenesis; peptidoglycan biosynthesis. Its function is as follows. Cell wall formation. This is D-alanine--D-alanine ligase from Bacillus pumilus (strain SAFR-032).